The primary structure comprises 578 residues: Proline--tRNA ligase (578 aa).

This sequence belongs to the class-II aminoacyl-tRNA synthetase family. ProS type 1 subfamily. As to quaternary structure, homodimer.

It is found in the cytoplasm. It carries out the reaction tRNA(Pro) + L-proline + ATP = L-prolyl-tRNA(Pro) + AMP + diphosphate. In terms of biological role, catalyzes the attachment of proline to tRNA(Pro) in a two-step reaction: proline is first activated by ATP to form Pro-AMP and then transferred to the acceptor end of tRNA(Pro). As ProRS can inadvertently accommodate and process non-cognate amino acids such as alanine and cysteine, to avoid such errors it has two additional distinct editing activities against alanine. One activity is designated as 'pretransfer' editing and involves the tRNA(Pro)-independent hydrolysis of activated Ala-AMP. The other activity is designated 'posttransfer' editing and involves deacylation of mischarged Ala-tRNA(Pro). The misacylated Cys-tRNA(Pro) is not edited by ProRS. This Burkholderia thailandensis (strain ATCC 700388 / DSM 13276 / CCUG 48851 / CIP 106301 / E264) protein is Proline--tRNA ligase.